The following is a 1380-amino-acid chain: DNA-directed RNA polymerase subunit beta (1380 aa).

Belongs to the RNA polymerase beta chain family. As to quaternary structure, the RNAP catalytic core consists of 2 alpha, 1 beta, 1 beta' and 1 omega subunit. When a sigma factor is associated with the core the holoenzyme is formed, which can initiate transcription.

The catalysed reaction is RNA(n) + a ribonucleoside 5'-triphosphate = RNA(n+1) + diphosphate. Functionally, DNA-dependent RNA polymerase catalyzes the transcription of DNA into RNA using the four ribonucleoside triphosphates as substrates. This is DNA-directed RNA polymerase subunit beta from Alcanivorax borkumensis (strain ATCC 700651 / DSM 11573 / NCIMB 13689 / SK2).